Consider the following 172-residue polypeptide: uncharacterized protein (172 aa).

A helical membrane pass occupies residues 109-129 (MLLLYLYYNLLLLTASTPLTF).

It is found in the membrane. This is an uncharacterized protein from Saccharomyces cerevisiae (strain ATCC 204508 / S288c) (Baker's yeast).